Here is a 701-residue protein sequence, read N- to C-terminus: Polyribonucleotide nucleotidyltransferase (701 aa).

2 residues coordinate Mg(2+): Asp-487 and Asp-493. A KH domain is found at 554 to 613 (PTMIAMKIDTDKIRDVIGKGGATIRAICEETKASIDIEDDGSIKIFGETKEAAEAARQRV). The S1 motif domain maps to 623–691 (GKIYVGKVER…NRGRIKLSIK (69 aa)).

Belongs to the polyribonucleotide nucleotidyltransferase family. In terms of assembly, component of the RNA degradosome, which is a multiprotein complex involved in RNA processing and mRNA degradation. The cofactor is Mg(2+).

It localises to the cytoplasm. The enzyme catalyses RNA(n+1) + phosphate = RNA(n) + a ribonucleoside 5'-diphosphate. Its function is as follows. Involved in mRNA degradation. Catalyzes the phosphorolysis of single-stranded polyribonucleotides processively in the 3'- to 5'-direction. The chain is Polyribonucleotide nucleotidyltransferase from Pseudomonas putida (strain W619).